The primary structure comprises 338 residues: MLGRCFPPNTKEKQQLRMIKLCDPAESELSPFLITLTLAVLLAEYLTGIIANGFITAIHAAEWVQNKSVSTSGRILVFLSVSRIALQSLMMLEITISSTSLSFYSEDAVYYAFKISFIFLNFCSLWFAAWLSFFYFVKIANFSYPLFLKLRWRISGLIPWLLWLSVFISFSHSMFCINICTGYCDNSFPIHSSNSTEKTYFSEISVVSLAFFFNLGIVIPLIMFILAAILLILSLKRHTLHMGSNATGSKDPSMEAHIGAIKATSYFLILYIFNAVALFIYLSNMFDINSLWNTLCQIIMAAYPASHSILLIKDNPGLRRAWKQLQHRLHLYPKQWTL.

The Extracellular segment spans residues methionine 1–serine 30. The chain crosses the membrane as a helical span at residues proline 31–alanine 51. At asparagine 52 to arginine 74 the chain is on the cytoplasmic side. Residues isoleucine 75–threonine 95 form a helical membrane-spanning segment. Topologically, residues isoleucine 96–serine 116 are extracellular. Residues phenylalanine 117–valine 137 form a helical membrane-spanning segment. The Cytoplasmic portion of the chain corresponds to lysine 138–glycine 156. Residues leucine 157–isoleucine 177 traverse the membrane as a helical segment. Over asparagine 178–serine 205 the chain is Extracellular. Residue asparagine 194 is glycosylated (N-linked (GlcNAc...) asparagine). Residues valine 206 to leucine 226 traverse the membrane as a helical segment. Over alanine 227–lysine 262 the chain is Cytoplasmic. Residues alanine 263 to serine 283 traverse the membrane as a helical segment. Residues asparagine 284–leucine 291 lie on the Extracellular side of the membrane. The helical transmembrane segment at tryptophan 292 to isoleucine 312 threads the bilayer. Over lysine 313–leucine 338 the chain is Cytoplasmic.

Belongs to the G-protein coupled receptor T2R family.

The protein localises to the membrane. Functionally, receptor that may play a role in the perception of bitterness and is gustducin-linked. May play a role in sensing the chemical composition of the gastrointestinal content. The activity of this receptor may stimulate alpha gustducin, mediate PLC-beta-2 activation and lead to the gating of TRPM5. This is Taste receptor type 2 member 39 (TAS2R39) from Macaca mulatta (Rhesus macaque).